Consider the following 121-residue polypeptide: Trypsin/alpha-amylase inhibitor CMX2 (121 aa).

Positions 1–24 (MAFKHQLILSTAILLAVLAAASAS) are cleaved as a signal peptide.

This sequence belongs to the protease inhibitor I6 (cereal trypsin/alpha-amylase inhibitor) family.

The protein localises to the secreted. The chain is Trypsin/alpha-amylase inhibitor CMX2 from Triticum aestivum (Wheat).